A 544-amino-acid polypeptide reads, in one-letter code: Neurofilament light polypeptide (544 aa).

At S2 the chain carries N-acetylserine. The head stretch occupies residues 2 to 87; sequence SSYSYDPYYT…KIVRTQEKVQ (86 aa). In terms of domain architecture, IF rod spans 84–394; the sequence is EKVQLQDLND…KLLEGEETRL (311 aa). The segment at 88-119 is coil 1A; the sequence is LQDLNDRFANFIERVHELEQRNKVLEAELLLL. The interval 120 to 132 is linker 1; sequence RQKHNEPSRLRDM. A coil 1B region spans residues 133-228; that stretch reads YEKEVRDVRL…KVHEEELSQL (96 aa). The linker 12 stretch occupies residues 229-246; sequence QSQVQYAQVSLEVEVAKP. The tract at residues 247–265 is coil 2A; sequence DLSSALRDIRGQYEKLAAK. The segment at 266–274 is linker 2; the sequence is NMQSAEEWF. The coil 2B stretch occupies residues 275–390; sequence KSRFTVLTQS…AAYRKLLEGE (116 aa). The tail, subdomain A stretch occupies residues 391–435; sequence ETRLSFSGVGAITSGYTQSAPVFGRSAYSLQSSSYMTSRAFPTYY. Residues 391 to 544 form a tail region; that stretch reads ETRLSFSGVG…EESEKKEKKK (154 aa). The tract at residues 436-544 is tail, subdomain B (acidic); that stretch reads SSHVQEEQLD…EESEKKEKKK (109 aa). A disordered region spans residues 450–544; it reads IESSRAEEAK…EESEKKEKKK (95 aa). Residues 451–462 show a composition bias toward basic and acidic residues; that stretch reads ESSRAEEAKAEA. Acidic residues predominate over residues 463-525; sequence PEEEEEEAAE…EAEGDGEEEG (63 aa). Residues 526-544 show a composition bias toward basic and acidic residues; that stretch reads ESKGDEAAEEESEKKEKKK.

It belongs to the intermediate filament family. In terms of assembly, forms homodimers (in vitro).

It localises to the cell projection. Its subcellular location is the axon. It is found in the cytoplasm. The protein localises to the cytoskeleton. Its function is as follows. Neurofilaments usually contain three intermediate filament proteins: NEFL, NEFM, and NEFH which are involved in the maintenance of neuronal caliber. May additionally cooperate with other neuronal intermediate filament proteins to form neuronal filamentous networks. In Xenopus laevis (African clawed frog), this protein is Neurofilament light polypeptide (nefl).